Reading from the N-terminus, the 62-residue chain is Large ribosomal subunit protein bL28 (62 aa).

The protein belongs to the bacterial ribosomal protein bL28 family.

This Halalkalibacterium halodurans (strain ATCC BAA-125 / DSM 18197 / FERM 7344 / JCM 9153 / C-125) (Bacillus halodurans) protein is Large ribosomal subunit protein bL28.